The chain runs to 420 residues: Putative U-box domain-containing protein 58 (420 aa).

Positions Asn4–Asp168 constitute an MIF4G domain. The stretch at Ser139–Gln352 forms a coiled coil. A U-box domain is found at Gln352–Val420.

The enzyme catalyses S-ubiquitinyl-[E2 ubiquitin-conjugating enzyme]-L-cysteine + [acceptor protein]-L-lysine = [E2 ubiquitin-conjugating enzyme]-L-cysteine + N(6)-ubiquitinyl-[acceptor protein]-L-lysine.. It functions in the pathway protein modification; protein ubiquitination. Functions as an E3 ubiquitin ligase. In Arabidopsis thaliana (Mouse-ear cress), this protein is Putative U-box domain-containing protein 58 (PUB58).